A 454-amino-acid chain; its full sequence is MDIKFLYDNHETLKEQKVTIIGRVRSNRQGKAVSFMVLNDGTVLNDLQVVYKPETFGFEQGSKARVSSIVEIEGILIPTPTRPQPFEINATSITLLDQAIEEYPLQKKEHSPEFLREISHLRARTKTFQAIFRIRSTAAFAIHKFFQENNYVYVTTPIITSNDAEGAGEQFVVTVNEDKDYANDFFGKKASLTVSGQLNGEAFAQAFKNIYTFGPTFRAENSHTTKHASEFWMIEPEVAFADINDNIQLMQDMLKSVVGYVLEKNMTELEFLQEQLEPGLIDKITGIVNVEFKVNTYEEVLKTLQDAIDKGHKFEENNIHFGLDLGTEHERFICEEVNKCPTFVINYPKDIKSFYMKQNDDGKTVAAVDLLVPGIGELCGGSEREANLDKILERCEFYGINPEELDWYIGLRKYGFYKSAGFGLGFERLIMYITGASNIRDVIPFPRTPKTLLY.

This sequence belongs to the class-II aminoacyl-tRNA synthetase family. As to quaternary structure, homodimer.

It localises to the cytoplasm. The catalysed reaction is tRNA(Asn) + L-asparagine + ATP = L-asparaginyl-tRNA(Asn) + AMP + diphosphate + H(+). This is Asparagine--tRNA ligase from Mesoplasma florum (strain ATCC 33453 / NBRC 100688 / NCTC 11704 / L1) (Acholeplasma florum).